Consider the following 456-residue polypeptide: tRNA modification GTPase MnmE (456 aa).

Positions 24, 81, and 120 each coordinate (6S)-5-formyl-5,6,7,8-tetrahydrofolate. The region spanning 216 to 379 is the TrmE-type G domain; that stretch reads GMKVVIAGRP…LREHLKECIG (164 aa). Asparagine 226 lines the K(+) pocket. GTP is bound by residues 226–231, 245–251, and 270–273; these read NAGKSS, TAIEGTT, and DTAG. Serine 230 is a Mg(2+) binding site. Positions 245, 247, and 250 each coordinate K(+). Threonine 251 contacts Mg(2+). Position 456 (lysine 456) interacts with (6S)-5-formyl-5,6,7,8-tetrahydrofolate.

Belongs to the TRAFAC class TrmE-Era-EngA-EngB-Septin-like GTPase superfamily. TrmE GTPase family. Homodimer. Heterotetramer of two MnmE and two MnmG subunits. K(+) is required as a cofactor.

Its subcellular location is the cytoplasm. Its function is as follows. Exhibits a very high intrinsic GTPase hydrolysis rate. Involved in the addition of a carboxymethylaminomethyl (cmnm) group at the wobble position (U34) of certain tRNAs, forming tRNA-cmnm(5)s(2)U34. The protein is tRNA modification GTPase MnmE of Marinobacter nauticus (strain ATCC 700491 / DSM 11845 / VT8) (Marinobacter aquaeolei).